A 396-amino-acid polypeptide reads, in one-letter code: Elongation factor Tu (396 aa).

Residues 10–207 (KPHCNIGTIG…VDAYIPQPPR (198 aa)) enclose the tr-type G domain. The tract at residues 19-26 (GHVDHGKT) is G1. A GTP-binding site is contributed by 19–26 (GHVDHGKT). Thr26 is a Mg(2+) binding site. Residues 60–64 (GITIS) form a G2 region. The segment at 81–84 (DCPG) is G3. GTP contacts are provided by residues 81–85 (DCPGH) and 136–139 (NKVD). A G4 region spans residues 136 to 139 (NKVD). A G5 region spans residues 174-176 (SAL).

The protein belongs to the TRAFAC class translation factor GTPase superfamily. Classic translation factor GTPase family. EF-Tu/EF-1A subfamily. As to quaternary structure, monomer.

Its subcellular location is the cytoplasm. The catalysed reaction is GTP + H2O = GDP + phosphate + H(+). GTP hydrolase that promotes the GTP-dependent binding of aminoacyl-tRNA to the A-site of ribosomes during protein biosynthesis. The chain is Elongation factor Tu from Novosphingobium aromaticivorans (strain ATCC 700278 / DSM 12444 / CCUG 56034 / CIP 105152 / NBRC 16084 / F199).